Here is a 430-residue protein sequence, read N- to C-terminus: Trigger factor (430 aa).

The PPIase FKBP-type domain maps to 157-242 (GDLVALETWS…AVEVSEPVLP (86 aa)).

It belongs to the FKBP-type PPIase family. Tig subfamily.

The protein resides in the cytoplasm. The enzyme catalyses [protein]-peptidylproline (omega=180) = [protein]-peptidylproline (omega=0). Its function is as follows. Involved in protein export. Acts as a chaperone by maintaining the newly synthesized protein in an open conformation. Functions as a peptidyl-prolyl cis-trans isomerase. The sequence is that of Trigger factor from Xanthomonas euvesicatoria pv. vesicatoria (strain 85-10) (Xanthomonas campestris pv. vesicatoria).